A 782-amino-acid chain; its full sequence is Probable methionine--tRNA ligase, cytoplasmic (782 aa).

The 'HIGH' region motif lies at 231–241 (PYVNNVPHLGN). Residues 551–555 (KFSKS) carry the 'KMSKS' region motif.

Belongs to the class-I aminoacyl-tRNA synthetase family.

Its subcellular location is the cytoplasm. It carries out the reaction tRNA(Met) + L-methionine + ATP = L-methionyl-tRNA(Met) + AMP + diphosphate. The polypeptide is Probable methionine--tRNA ligase, cytoplasmic (rar1) (Schizosaccharomyces pombe (strain 972 / ATCC 24843) (Fission yeast)).